Consider the following 472-residue polypeptide: Cell division protein FtsP (472 aa).

Positions Met-1–Ala-32 form a signal peptide, tat-type signal.

It belongs to the FtsP family. In terms of processing, predicted to be exported by the Tat system. The position of the signal peptide cleavage has not been experimentally proven.

Its subcellular location is the periplasm. In terms of biological role, cell division protein that is required for growth during stress conditions. May be involved in protecting or stabilizing the divisomal assembly under conditions of stress. The chain is Cell division protein FtsP from Edwardsiella tarda (strain FL6-60).